The following is a 444-amino-acid chain: UDP-N-acetylmuramoylalanine--D-glutamate ligase (444 aa).

Position 118–124 (118–124 (GTNGKTT)) interacts with ATP.

Belongs to the MurCDEF family.

The protein resides in the cytoplasm. The enzyme catalyses UDP-N-acetyl-alpha-D-muramoyl-L-alanine + D-glutamate + ATP = UDP-N-acetyl-alpha-D-muramoyl-L-alanyl-D-glutamate + ADP + phosphate + H(+). It functions in the pathway cell wall biogenesis; peptidoglycan biosynthesis. Cell wall formation. Catalyzes the addition of glutamate to the nucleotide precursor UDP-N-acetylmuramoyl-L-alanine (UMA). The chain is UDP-N-acetylmuramoylalanine--D-glutamate ligase from Protochlamydia amoebophila (strain UWE25).